Here is a 349-residue protein sequence, read N- to C-terminus: UDP-3-O-acylglucosamine N-acyltransferase (349 aa).

Residue histidine 246 is the Proton acceptor of the active site.

This sequence belongs to the transferase hexapeptide repeat family. LpxD subfamily. As to quaternary structure, homotrimer.

The enzyme catalyses a UDP-3-O-[(3R)-3-hydroxyacyl]-alpha-D-glucosamine + a (3R)-hydroxyacyl-[ACP] = a UDP-2-N,3-O-bis[(3R)-3-hydroxyacyl]-alpha-D-glucosamine + holo-[ACP] + H(+). It functions in the pathway bacterial outer membrane biogenesis; LPS lipid A biosynthesis. In terms of biological role, catalyzes the N-acylation of UDP-3-O-acylglucosamine using 3-hydroxyacyl-ACP as the acyl donor. Is involved in the biosynthesis of lipid A, a phosphorylated glycolipid that anchors the lipopolysaccharide to the outer membrane of the cell. This is UDP-3-O-acylglucosamine N-acyltransferase from Nostoc sp. (strain PCC 7120 / SAG 25.82 / UTEX 2576).